We begin with the raw amino-acid sequence, 94 residues long: Small ribosomal subunit protein uS17 (94 aa).

It belongs to the universal ribosomal protein uS17 family. In terms of assembly, part of the 30S ribosomal subunit.

In terms of biological role, one of the primary rRNA binding proteins, it binds specifically to the 5'-end of 16S ribosomal RNA. In Streptomyces avermitilis (strain ATCC 31267 / DSM 46492 / JCM 5070 / NBRC 14893 / NCIMB 12804 / NRRL 8165 / MA-4680), this protein is Small ribosomal subunit protein uS17.